A 310-amino-acid chain; its full sequence is Phosphoribosylaminoimidazole-succinocarboxamide synthase (310 aa).

It belongs to the SAICAR synthetase family.

It carries out the reaction 5-amino-1-(5-phospho-D-ribosyl)imidazole-4-carboxylate + L-aspartate + ATP = (2S)-2-[5-amino-1-(5-phospho-beta-D-ribosyl)imidazole-4-carboxamido]succinate + ADP + phosphate + 2 H(+). Its pathway is purine metabolism; IMP biosynthesis via de novo pathway; 5-amino-1-(5-phospho-D-ribosyl)imidazole-4-carboxamide from 5-amino-1-(5-phospho-D-ribosyl)imidazole-4-carboxylate: step 1/2. This is Phosphoribosylaminoimidazole-succinocarboxamide synthase from Xanthomonas axonopodis pv. citri (strain 306).